The following is a 457-amino-acid chain: Glutamate--tRNA ligase 2 (457 aa).

Positions 9–19 (PSPTGYIHIGN) match the 'HIGH' region motif. The 'KMSKS' region signature appears at 250–254 (GLSKR). Lys253 lines the ATP pocket.

Belongs to the class-I aminoacyl-tRNA synthetase family. Glutamate--tRNA ligase type 1 subfamily. In terms of assembly, monomer.

The protein localises to the cytoplasm. It catalyses the reaction tRNA(Glu) + L-glutamate + ATP = L-glutamyl-tRNA(Glu) + AMP + diphosphate. In terms of biological role, catalyzes the attachment of glutamate to tRNA(Glu) in a two-step reaction: glutamate is first activated by ATP to form Glu-AMP and then transferred to the acceptor end of tRNA(Glu). In Brucella melitensis biotype 1 (strain ATCC 23456 / CCUG 17765 / NCTC 10094 / 16M), this protein is Glutamate--tRNA ligase 2.